Here is a 295-residue protein sequence, read N- to C-terminus: Protease HtpX (295 aa).

Transmembrane regions (helical) follow at residues 4-24 (ILLFVATNLAVVLVASITLSL) and 41-61 (SSLLVFCAVFGFAGSLVSLFI). A Zn(2+)-binding site is contributed by His-147. Glu-148 is an active-site residue. Residue His-151 participates in Zn(2+) binding. The next 2 helical transmembrane spans lie at 158-178 (VTLALVQGVVNTFVMFFARII) and 199-219 (VATIVAELVLGILASMIVMWF). Glu-224 contacts Zn(2+).

This sequence belongs to the peptidase M48B family. Zn(2+) serves as cofactor.

It localises to the cell inner membrane. The polypeptide is Protease HtpX (Pseudomonas putida (strain W619)).